The chain runs to 184 residues: Putative manganese efflux pump MntP (184 aa).

The next 6 membrane-spanning stretches (helical) occupy residues 5–25 (LISI…VSLT), 38–58 (ILYY…IGYI), 67–87 (VSTV…LNMI), 107–127 (LTLL…TFAL), 133–153 (LLPC…GIFI), and 164–184 (KFEI…LLGY).

The protein belongs to the MntP (TC 9.B.29) family.

Its subcellular location is the cell membrane. In terms of biological role, probably functions as a manganese efflux pump. This chain is Putative manganese efflux pump MntP, found in Methanobrevibacter smithii (strain ATCC 35061 / DSM 861 / OCM 144 / PS).